A 432-amino-acid polypeptide reads, in one-letter code: uncharacterized protein (432 aa).

SIS domains lie at 105 to 244 (WLTE…DLVS) and 277 to 422 (CDKK…VDLP).

This is an uncharacterized protein from Saccharomyces cerevisiae (strain Lalvin EC1118 / Prise de mousse) (Baker's yeast).